The sequence spans 482 residues: ATP synthase subunit beta (482 aa).

162–169 is an ATP binding site; it reads GGAGVGKT.

It belongs to the ATPase alpha/beta chains family. In terms of assembly, F-type ATPases have 2 components, CF(1) - the catalytic core - and CF(0) - the membrane proton channel. CF(1) has five subunits: alpha(3), beta(3), gamma(1), delta(1), epsilon(1). CF(0) has four main subunits: a(1), b(1), b'(1) and c(9-12).

The protein resides in the cellular thylakoid membrane. The catalysed reaction is ATP + H2O + 4 H(+)(in) = ADP + phosphate + 5 H(+)(out). Produces ATP from ADP in the presence of a proton gradient across the membrane. The catalytic sites are hosted primarily by the beta subunits. In Trichormus variabilis (strain ATCC 29413 / PCC 7937) (Anabaena variabilis), this protein is ATP synthase subunit beta.